The chain runs to 423 residues: MSEDHGKDYTLESDSELRFEIEQKDAKVLVSLVSGFAELFGTELVKKKQYEFGVGAKVAIFTYQGCVLHVSGKMDVCYISKETPMVQYVNCHAALEQFRMEAEEKDRYGPVAMVVGPMDVGKSTLCRILLNYAVRVGRRPLYADLDVGQGSIAISGSVATILIERPANVEEGFAKTAPLVYHFGHKSPSGNSVLYNAVVSKMAEVTLQSLNSNKRTKSSGIIINTCGWVKGSGYAHLLHAAKAYGACAIFVLDQERLYNELLRDVPKEVHVVLLPKSGGVVERSKELRHEARDQRIKEYFYGNARAPFYPFSFEVKFQDLRLYKIGAPPLPDSCMPIGMKAEDNKTKVVAVTPTPALIHHVLALSFAESVEDDVIGTNVAGFCCVTEVDMERQAVMLLSPQPRPLPPNALLLWSELQFMDNHT.

ATP-binding positions include Glu16, Lys57, and 119 to 124; that span reads DVGKST.

Belongs to the Clp1 family. Clp1 subfamily.

The protein localises to the nucleus. Required for endonucleolytic cleavage during polyadenylation-dependent pre-mRNA 3'-end formation. The polypeptide is Protein CLP1 homolog (cbc) (Drosophila sechellia (Fruit fly)).